Reading from the N-terminus, the 118-residue chain is Small ribosomal subunit protein uS13 (118 aa).

The tract at residues 92–118 (RRGLPVRGQRTKTNARTRKGPRKPIKK) is disordered.

It belongs to the universal ribosomal protein uS13 family. As to quaternary structure, part of the 30S ribosomal subunit. Forms a loose heterodimer with protein S19. Forms two bridges to the 50S subunit in the 70S ribosome.

In terms of biological role, located at the top of the head of the 30S subunit, it contacts several helices of the 16S rRNA. In the 70S ribosome it contacts the 23S rRNA (bridge B1a) and protein L5 of the 50S subunit (bridge B1b), connecting the 2 subunits; these bridges are implicated in subunit movement. Contacts the tRNAs in the A and P-sites. The sequence is that of Small ribosomal subunit protein uS13 from Yersinia enterocolitica serotype O:8 / biotype 1B (strain NCTC 13174 / 8081).